We begin with the raw amino-acid sequence, 361 residues long: tRNA 2-selenouridine synthase (361 aa).

The region spanning 14–137 (LIADTPIIDV…LRQTAIQATI (124 aa)) is the Rhodanese domain. C97 functions as the S-selanylcysteine intermediate in the catalytic mechanism.

The protein belongs to the SelU family. In terms of assembly, monomer.

The catalysed reaction is 5-methylaminomethyl-2-thiouridine(34) in tRNA + selenophosphate + (2E)-geranyl diphosphate + H2O + H(+) = 5-methylaminomethyl-2-selenouridine(34) in tRNA + (2E)-thiogeraniol + phosphate + diphosphate. It catalyses the reaction 5-methylaminomethyl-2-thiouridine(34) in tRNA + (2E)-geranyl diphosphate = 5-methylaminomethyl-S-(2E)-geranyl-thiouridine(34) in tRNA + diphosphate. The enzyme catalyses 5-methylaminomethyl-S-(2E)-geranyl-thiouridine(34) in tRNA + selenophosphate + H(+) = 5-methylaminomethyl-2-(Se-phospho)selenouridine(34) in tRNA + (2E)-thiogeraniol. It carries out the reaction 5-methylaminomethyl-2-(Se-phospho)selenouridine(34) in tRNA + H2O = 5-methylaminomethyl-2-selenouridine(34) in tRNA + phosphate. Functionally, involved in the post-transcriptional modification of the uridine at the wobble position (U34) of tRNA(Lys), tRNA(Glu) and tRNA(Gln). Catalyzes the conversion of 2-thiouridine (S2U-RNA) to 2-selenouridine (Se2U-RNA). Acts in a two-step process involving geranylation of 2-thiouridine (S2U) to S-geranyl-2-thiouridine (geS2U) and subsequent selenation of the latter derivative to 2-selenouridine (Se2U) in the tRNA chain. This is tRNA 2-selenouridine synthase from Escherichia coli O6:H1 (strain CFT073 / ATCC 700928 / UPEC).